A 190-amino-acid chain; its full sequence is Jupiter microtubule associated homolog 2 (190 aa).

Methionine 1 carries the post-translational modification N-acetylmethionine. A compositionally biased stretch (polar residues) spans 1–15; it reads MFQGADSQAGKSGSR. The segment at 1-190 is disordered; the sequence is MFQGADSQAG…PGGKSSLSFY (190 aa). Lysine 11 carries the post-translational modification N6-acetyllysine. Serine 30 is subject to Phosphoserine. Residues 35–44 show a composition bias toward polar residues; it reads ISSSKPNRMA. Residues serine 45, serine 69, and serine 97 each carry the phosphoserine modification. Composition is skewed to basic and acidic residues over residues 110–129 and 138–153; these read KPKD…DLKA and EQSD…HAKI. At serine 144 the chain carries Phosphoserine.

The protein belongs to the JUPITER family. As to quaternary structure, monomer. Dimer. Interacts with TPCN1.

The protein localises to the cytoplasm. It is found in the nucleus. Nicotinic acid adenine dinucleotide phosphate (NAADP) binding protein required for NAADP-evoked intracellular calcium release. Confers NAADP-sensitivity to the two pore channels (TPCs) complex. Enables NAADP to activate Ca(2+) release from the endoplasmic reticulum through ryanodine receptors. This chain is Jupiter microtubule associated homolog 2, found in Mus musculus (Mouse).